A 476-amino-acid chain; its full sequence is Membrane-bound lytic murein transglycosylase F (476 aa).

Positions 1–16 (MIKTLFIILLCGILSA) are cleaved as a signal peptide. Residues 17 to 259 (CQPVDIQDVD…HLNEKYFGHV (243 aa)) form a non-LT domain region. Residues 260-476 (KRFDYVDTRA…VPAKSHVSAQ (217 aa)) form an LT domain region. Glu304 is a catalytic residue.

The protein in the N-terminal section; belongs to the bacterial solute-binding protein 3 family. It in the C-terminal section; belongs to the transglycosylase Slt family.

The protein resides in the cell outer membrane. It carries out the reaction Exolytic cleavage of the (1-&gt;4)-beta-glycosidic linkage between N-acetylmuramic acid (MurNAc) and N-acetylglucosamine (GlcNAc) residues in peptidoglycan, from either the reducing or the non-reducing ends of the peptidoglycan chains, with concomitant formation of a 1,6-anhydrobond in the MurNAc residue.. In terms of biological role, murein-degrading enzyme that degrades murein glycan strands and insoluble, high-molecular weight murein sacculi, with the concomitant formation of a 1,6-anhydromuramoyl product. Lytic transglycosylases (LTs) play an integral role in the metabolism of the peptidoglycan (PG) sacculus. Their lytic action creates space within the PG sacculus to allow for its expansion as well as for the insertion of various structures such as secretion systems and flagella. The polypeptide is Membrane-bound lytic murein transglycosylase F (Shewanella frigidimarina (strain NCIMB 400)).